Reading from the N-terminus, the 148-residue chain is Cytochrome c-type biogenesis protein CcmE (148 aa).

The Cytoplasmic portion of the chain corresponds to 1–7 (MTRKQRR). The chain crosses the membrane as a helical; Signal-anchor for type II membrane protein span at residues 8-28 (LYFVLLGMAALGGAVALVLTA). The Periplasmic portion of the chain corresponds to 29–148 (ISDSLVYFYS…QWNDGKQPKQ (120 aa)). His121 and Tyr125 together coordinate heme.

Belongs to the CcmE/CycJ family.

The protein localises to the cell inner membrane. Heme chaperone required for the biogenesis of c-type cytochromes. Transiently binds heme delivered by CcmC and transfers the heme to apo-cytochromes in a process facilitated by CcmF and CcmH. In Paramagnetospirillum magneticum (strain ATCC 700264 / AMB-1) (Magnetospirillum magneticum), this protein is Cytochrome c-type biogenesis protein CcmE.